The sequence spans 339 residues: NADH-quinone oxidoreductase subunit H (339 aa).

Transmembrane regions (helical) follow at residues 9–29 (IFPL…LILC), 50–70 (PNVV…KLLF), 82–102 (ILFI…WAVI), 115–135 (VGVL…IIAG), 161–181 (MGLV…SEII), 187–207 (IPWW…ISVL), 235–255 (MGFA…SAMT), 275–295 (IPGF…FLWI), and 311–331 (GWKV…SVLV).

It belongs to the complex I subunit 1 family. In terms of assembly, NDH-1 is composed of 14 different subunits. Subunits NuoA, H, J, K, L, M, N constitute the membrane sector of the complex.

The protein resides in the cell inner membrane. The catalysed reaction is a quinone + NADH + 5 H(+)(in) = a quinol + NAD(+) + 4 H(+)(out). In terms of biological role, NDH-1 shuttles electrons from NADH, via FMN and iron-sulfur (Fe-S) centers, to quinones in the respiratory chain. The immediate electron acceptor for the enzyme in this species is believed to be ubiquinone. Couples the redox reaction to proton translocation (for every two electrons transferred, four hydrogen ions are translocated across the cytoplasmic membrane), and thus conserves the redox energy in a proton gradient. This subunit may bind ubiquinone. The sequence is that of NADH-quinone oxidoreductase subunit H from Rickettsia rickettsii (strain Iowa).